A 316-amino-acid polypeptide reads, in one-letter code: ATP synthase gamma chain (316 aa).

The protein belongs to the ATPase gamma chain family. In terms of assembly, F-type ATPases have 2 components, CF(1) - the catalytic core - and CF(0) - the membrane proton channel. CF(1) has five subunits: alpha(3), beta(3), gamma(1), delta(1), epsilon(1). CF(0) has three main subunits: a, b and c.

The protein localises to the cellular thylakoid membrane. Produces ATP from ADP in the presence of a proton gradient across the membrane. The gamma chain is believed to be important in regulating ATPase activity and the flow of protons through the CF(0) complex. The protein is ATP synthase gamma chain of Synechococcus elongatus (strain ATCC 33912 / PCC 7942 / FACHB-805) (Anacystis nidulans R2).